Consider the following 88-residue polypeptide: Small ribosomal subunit protein bS20 (88 aa).

Belongs to the bacterial ribosomal protein bS20 family.

Its function is as follows. Binds directly to 16S ribosomal RNA. The polypeptide is Small ribosomal subunit protein bS20 (Heliobacterium modesticaldum (strain ATCC 51547 / Ice1)).